The chain runs to 76 residues: Precursor of CEP7 (76 aa).

The signal sequence occupies residues 1–27 (MAKCTLTSLILLLIVLVLIQESHIVEG). Residues 28–61 (RPLKSSRISNVSKKFAAGNSNLSSKLTTEDHSLD) constitute a propeptide that is removed on maturation. Residues asparagine 37 and asparagine 48 are each glycosylated (N-linked (GlcNAc...) asparagine). The disordered stretch occupies residues 49–76 (LSSKLTTEDHSLDAFRPTNPGNSPGIGH). Proline 65, proline 68, and proline 72 each carry hydroxyproline.

This sequence belongs to the C-terminally encoded plant signaling peptide (CEP) family. In terms of assembly, interacts with CEP receptors (e.g. CEPR1 and CEPR2). The mature small signaling peptide is generated by proteolytic processing of the longer precursor.

Its subcellular location is the secreted. It is found in the extracellular space. The protein resides in the apoplast. Its function is as follows. Extracellular signaling peptide that may regulate primary root growth rate and systemic nitrogen (N)-demand signaling. Mediates up-regulation of genes involved in N uptake and assimilation pathways. The polypeptide is Precursor of CEP7 (Arabidopsis thaliana (Mouse-ear cress)).